A 478-amino-acid polypeptide reads, in one-letter code: Cytochrome P450 monooxygenase asqL (478 aa).

A heme-binding site is contributed by C407.

It belongs to the cytochrome P450 family. Heme serves as cofactor.

Its pathway is secondary metabolite biosynthesis. It participates in alkaloid biosynthesis. It functions in the pathway mycotoxin biosynthesis. Cytochrome P450 monooxygenase; part of the gene cluster that mediates the biosynthesis of the aspoquinolone mycotoxins. The role of asqL within the aspoquinolone pathway has still to be determined. The first step of the pathway is catalyzed by the nonribosomal peptide synthetase asqK that condenses anthranilic acid and O-methyl-L-tyrosine to produce 4'-methoxycyclopeptin. 4'-methoxycyclopeptin is then converted to 4'-methoxydehydrocyclopeptin by the ketoglutarate-dependent dioxygenase asqJ. AsqJ also converts its first product 4'-methoxydehydrocyclopeptin to 4'-methoxycyclopenin. The following conversion of 4'-methoxycyclopenin into 4'-methoxyviridicatin is catalyzed by the cyclopenase asqI. 4'-methoxyviridicatin is the precursor of quinolone natural products, and is further converted to quinolinone B. The prenyltransferase asqH1 then catalyzes the canonical Friedel-Crafts alkylation of quinolinone B with dimethylallyl cation to yield dimethylallyl quinolone, which is subjected to FAD-dependent dehydrogenation by the FAD-linked oxidoreductase asqF to yield conjugated aryl diene. The delta(3') double bond then serves as the site of the second alkylation with DMAPP catalyzed by the prenyltransferase asqH2 to yield a carbenium ion intermediate, which can be attacked by H(2)O to yield a styrenyl quinolone containing a C3'-hydroxyprenyl chain. The FAD-dependent monooxygenase asqG performs epoxidation of the terminal C7'-C8' olefin. Finally, after dehydratation of the epoxide at C3 by asqC, the quinolone epoxide rearrangement protein asqO catalyzes an enzymatic 3-exo-tet cyclization to yield the cyclopropyl-THF ring system in aspoquinolone. This is Cytochrome P450 monooxygenase asqL from Emericella nidulans (strain FGSC A4 / ATCC 38163 / CBS 112.46 / NRRL 194 / M139) (Aspergillus nidulans).